The primary structure comprises 688 residues: Polyribonucleotide nucleotidyltransferase (688 aa).

Residues D484 and D490 each coordinate Mg(2+). The KH domain maps to 550 to 609 (PTTEIFNVAPDKIVEIIGQGGRVIKEIVEKFEVKIDLNKPSGEVKIMGNKERVLKTKEFI). The S1 motif domain maps to 626 to 688 (DEVLEAQVKR…NKGKIALDLA (63 aa)).

Belongs to the polyribonucleotide nucleotidyltransferase family. Mg(2+) serves as cofactor.

The protein resides in the cytoplasm. The catalysed reaction is RNA(n+1) + phosphate = RNA(n) + a ribonucleoside 5'-diphosphate. In terms of biological role, involved in mRNA degradation. Catalyzes the phosphorolysis of single-stranded polyribonucleotides processively in the 3'- to 5'-direction. This is Polyribonucleotide nucleotidyltransferase from Helicobacter pylori (strain G27).